We begin with the raw amino-acid sequence, 238 residues long: Glyceraldehyde 3-phosphate phosphatase (238 aa).

This sequence belongs to the HAD-like hydrolase superfamily. Requires Mg(2+) as cofactor.

Catalyzes the dephosphorylation of D,L-glyceraldehyde 3-phosphate in vitro. The polypeptide is Glyceraldehyde 3-phosphate phosphatase (Pyrococcus abyssi (strain GE5 / Orsay)).